The chain runs to 193 residues: MSDNYTPRLKAQYREEIREKLQAEFNFDNVMQIPGVTKVVVNMGVGDAARDSKMINGAIADLTAITGQKPQVRTAKKAIANFKLREGMPIGARVTLRGDRMWEFLDRLLTIALPRIRDFRGLSDRQFDGHGNYTFGLSEQTMFYEIDVDKMDRPRGMNITVVTTATNDEEGRALLRRLGFPFKDKDGKMQQAD.

This sequence belongs to the universal ribosomal protein uL5 family. Part of the 50S ribosomal subunit; part of the 5S rRNA/L5/L18/L25 subcomplex. Contacts the 5S rRNA and the P site tRNA. Forms a bridge to the 30S subunit in the 70S ribosome.

This is one of the proteins that bind and probably mediate the attachment of the 5S RNA into the large ribosomal subunit, where it forms part of the central protuberance. In the 70S ribosome it contacts protein S13 of the 30S subunit (bridge B1b), connecting the 2 subunits; this bridge is implicated in subunit movement. Contacts the P site tRNA; the 5S rRNA and some of its associated proteins might help stabilize positioning of ribosome-bound tRNAs. The polypeptide is Large ribosomal subunit protein uL5 (Corynebacterium urealyticum (strain ATCC 43042 / DSM 7109)).